A 483-amino-acid polypeptide reads, in one-letter code: Zinc finger CCCH domain-containing protein 25 (483 aa).

The C3H1-type zinc-finger motif lies at 157 to 184; the sequence is RNRAHICSFFIRGECTRGDECPYRHEMP. An RRM domain is found at 228–301; it reads RTLYVGGLNS…QRLKLTWGRP (74 aa). Disordered regions lie at residues 298–317 and 336–483; these read WGRPQVPKPDQDGSNQQGSV and PPML…GSSQ. Residues 336–351 are compositionally biased toward pro residues; that stretch reads PPMLQYYMHPPPPQPP. The segment covering 370–380 has biased composition (low complexity); the sequence is SSSKESGSSTS. A compositionally biased stretch (polar residues) spans 381 to 391; the sequence is DNRGASSSSYT. 2 stretches are compositionally biased toward low complexity: residues 392–401 and 409–423; these read MPPHGHYPQH and YGGYMQPPYQQYPPY. Over residues 438 to 459 the composition is skewed to pro residues; the sequence is QPGPGSRPNPPHPSSVSAPPPD. Over residues 460–476 the composition is skewed to low complexity; it reads SVSAAPSGSSQQSADAA.

The chain is Zinc finger CCCH domain-containing protein 25 from Arabidopsis thaliana (Mouse-ear cress).